Here is an 82-residue protein sequence, read N- to C-terminus: Small ribosomal subunit protein bS16 (82 aa).

Belongs to the bacterial ribosomal protein bS16 family.

In Vibrio cholerae serotype O1 (strain ATCC 39541 / Classical Ogawa 395 / O395), this protein is Small ribosomal subunit protein bS16.